Reading from the N-terminus, the 517-residue chain is ATP synthase subunit alpha (517 aa).

Position 174-181 (174-181 (GDRQTGKT)) interacts with ATP.

Belongs to the ATPase alpha/beta chains family. F-type ATPases have 2 components, CF(1) - the catalytic core - and CF(0) - the membrane proton channel. CF(1) has five subunits: alpha(3), beta(3), gamma(1), delta(1), epsilon(1). CF(0) has four main subunits: a(1), b(1), b'(1) and c(9-12).

It localises to the cell inner membrane. It carries out the reaction ATP + H2O + 4 H(+)(in) = ADP + phosphate + 5 H(+)(out). Its function is as follows. Produces ATP from ADP in the presence of a proton gradient across the membrane. The alpha chain is a regulatory subunit. This is ATP synthase subunit alpha from Methylibium petroleiphilum (strain ATCC BAA-1232 / LMG 22953 / PM1).